Here is an 831-residue protein sequence, read N- to C-terminus: MutS protein homolog 5 (831 aa).

The interval 1–43 (MAFRATPGRTPPGPGPGVPSASFSSPQPAMAAPGGIEEEDEEE) is disordered. 589 to 596 (GPNSSGKS) serves as a coordination point for ATP.

It belongs to the DNA mismatch repair MutS family. Heterooligomer of MSH4 and MSH5. Interacts with HJURP. Interacts with C7h12orf40/REDIC1.

Functionally, involved in DNA mismatch repair and meiotic recombination processes. Facilitates crossovers between homologs during meiosis. This chain is MutS protein homolog 5 (Msh5), found in Rattus norvegicus (Rat).